The chain runs to 1233 residues: Integrator complex subunit 4 homolog (1233 aa).

2 HEAT repeats span residues 236–273 (SLIN…NLDK) and 275–310 (SEEI…RGAS). The tract at residues 426-473 (RLQQKQQQQQQQQQQQQQQPPQQQPSQQPNQQPNQQQTNVSGTHIATP) is disordered. Over residues 428-462 (QQKQQQQQQQQQQQQQQPPQQQPSQQPNQQPNQQQ) the composition is skewed to low complexity. 3 HEAT repeats span residues 487–524 (ILES…RNDE), 525–561 (FAQK…NVVI), and 563–597 (EEQL…SNYS). A compositionally biased stretch (low complexity) spans 767–792 (NNNTNNNNNNNNNNNNNNNNNNNNNN). 2 disordered regions span residues 767 to 796 (NNNT…DEND) and 993 to 1057 (DKKL…TTTT). Over residues 1000–1013 (EENEENEENENNEN) the composition is skewed to acidic residues. Residues 1014-1030 (ENEKENGKNKEKEKNEN) show a composition bias toward basic and acidic residues. Residues 1046 to 1057 (KTTSELIKTTTT) show a composition bias toward low complexity.

The protein belongs to the Integrator subunit 4 family. As to quaternary structure, component of the Integrator complex. The core complex associates with protein phosphatase 2A subunits, to form the Integrator-PP2A (INTAC) complex.

The protein localises to the nucleus. It is found in the cytoplasm. Its function is as follows. Component of the integrator complex, a multiprotein complex that terminates RNA polymerase II (Pol II) transcription in the promoter-proximal region of genes. The integrator complex provides a quality checkpoint during transcription elongation by driving premature transcription termination of transcripts that are unfavorably configured for transcriptional elongation: the complex terminates transcription by (1) catalyzing dephosphorylation of the C-terminal domain (CTD) of Pol II subunit polr2a, (2) degrading the exiting nascent RNA transcript via endonuclease activity and (3) promoting the release of Pol II from bound DNA. The integrator complex is also involved in terminating the synthesis of non-coding Pol II transcripts, such as enhancer RNAs (eRNAs), small nuclear RNAs (snRNAs), telomerase RNAs and long non-coding RNAs (lncRNAs). This Dictyostelium discoideum (Social amoeba) protein is Integrator complex subunit 4 homolog (ints4).